We begin with the raw amino-acid sequence, 364 residues long: MAQQTPLYEQHTLCGARMVDFHGWMMPLHYGSQIDEHHAVRTDAGMFDVSHMTIVDLRGSRTREFLRYLLANDVAKLTKSGKALYSGMLNASGGVIDDLIVYYFTEDLFRLVVNSATREKDLSWITQHAEPFGIEITVRDDLSMIAVQGPNAQAKAATLFNDAQRQAVEGMKPFFGVQAGDLFIATTGYTGEAGYEIALPNEKAADFWRALVEAGVKPCGLGARDTLRLEAGMNLYGQEMDETISPLAANMGWTIAWEPADRDFIGREALEVQREHGTEKLVGLVMTEKGVLRNELPVRFTDAQGNQHEGIITSGTFSPTLGYSIALARVPEGIGETAIVQIRNREMPVKVTKPVFVRNGKAVA.

Belongs to the GcvT family. The glycine cleavage system is composed of four proteins: P, T, L and H.

The catalysed reaction is N(6)-[(R)-S(8)-aminomethyldihydrolipoyl]-L-lysyl-[protein] + (6S)-5,6,7,8-tetrahydrofolate = N(6)-[(R)-dihydrolipoyl]-L-lysyl-[protein] + (6R)-5,10-methylene-5,6,7,8-tetrahydrofolate + NH4(+). Its function is as follows. The glycine cleavage system catalyzes the degradation of glycine. This is Aminomethyltransferase from Shigella boydii serotype 18 (strain CDC 3083-94 / BS512).